The following is a 29-amino-acid chain: Cytochrome b6-f complex subunit 8 (29 aa).

A helical transmembrane segment spans residues 3–23 (IDVLGWVALLVVFTWSIAMVV).

Belongs to the PetN family. In terms of assembly, the 4 large subunits of the cytochrome b6-f complex are cytochrome b6, subunit IV (17 kDa polypeptide, PetD), cytochrome f and the Rieske protein, while the 4 small subunits are PetG, PetL, PetM and PetN. The complex functions as a dimer.

Its subcellular location is the cellular thylakoid membrane. Functionally, component of the cytochrome b6-f complex, which mediates electron transfer between photosystem II (PSII) and photosystem I (PSI), cyclic electron flow around PSI, and state transitions. The polypeptide is Cytochrome b6-f complex subunit 8 (Mastigocladus laminosus (Fischerella sp.)).